The primary structure comprises 163 residues: Nucleotide-binding protein DET1318 (163 aa).

This sequence belongs to the YajQ family.

Its function is as follows. Nucleotide-binding protein. In Dehalococcoides mccartyi (strain ATCC BAA-2266 / KCTC 15142 / 195) (Dehalococcoides ethenogenes (strain 195)), this protein is Nucleotide-binding protein DET1318.